Here is an 842-residue protein sequence, read N- to C-terminus: Leucine--tRNA ligase (842 aa).

A 'HIGH' region motif is present at residues 44-55 (PYPSANGLHVGH). The 'KMSKS' region motif lies at 619-623 (KMSKS). Position 622 (K622) interacts with ATP.

Belongs to the class-I aminoacyl-tRNA synthetase family.

Its subcellular location is the cytoplasm. It carries out the reaction tRNA(Leu) + L-leucine + ATP = L-leucyl-tRNA(Leu) + AMP + diphosphate. The polypeptide is Leucine--tRNA ligase (Borrelia recurrentis (strain A1)).